A 430-amino-acid polypeptide reads, in one-letter code: Arrestin-related trafficking adapter 10 (430 aa).

Residues 55–75 (AEADRHSSRLPQDPQTQYTKE) form a disordered region. The span at 63-72 (RLPQDPQTQY) shows a compositional bias: polar residues.

Belongs to the ART10 family.

It is found in the cytoplasm. Its function is as follows. May regulate endocytosis by recruiting RSP5 ubiquitin ligase activity to specific plasma membrane proteins in response to extracellular stimuli. This is Arrestin-related trafficking adapter 10 (ART10) from Eremothecium gossypii (strain ATCC 10895 / CBS 109.51 / FGSC 9923 / NRRL Y-1056) (Yeast).